Reading from the N-terminus, the 942-residue chain is ATP-dependent RNA helicase DDX42 (942 aa).

Over residues 1–18 (MNWNKGGPGTKRGFGFGG) the composition is skewed to gly residues. Residues 1–114 (MNWNKGGPGT…KPIDSDSDDD (114 aa)) are disordered. K5 carries the N6-acetyllysine modification. Omega-N-methylarginine is present on R12. Residues 35-52 (SHSAFGATSSSSGFGKSA) are compositionally biased toward low complexity. S58 carries the phosphoserine modification. The segment covering 70 to 84 (DEENAYFEDEEEDSS) has biased composition (acidic residues). S96, S104, S109, and S111 each carry phosphoserine. Positions 116 to 157 (LEAFMAEVEDQAARDMKRLEEKDKERKNVKGIRDDIEEEDDQ) form a coiled coil. Residues 182-203 (EYDSDGNPIAPTKKIIDPLPPI) are disordered. At S185 the chain carries Phosphoserine. Residues 253 to 281 (SSFAHFGFDEQLMHQIRKSEYTQPTPIQC) carry the Q motif motif. The Helicase ATP-binding domain maps to 284-459 (VPVALSGRDM…RDILIDPIRV (176 aa)). 297–304 (AKTGSGKT) is an ATP binding site. Residues 407–410 (DEAD) carry the DEAD box motif. The Helicase C-terminal domain maps to 487–632 (WLTRRLVEFT…HVSKELLDLA (146 aa)). Composition is skewed to polar residues over residues 737–760 (LNSV…TSAT) and 786–798 (GVNN…NSRE). 2 disordered regions span residues 737 to 762 (LNSV…ATKG) and 783 to 942 (GAQG…RWDS). The tract at residues 738-833 (NSVPTNSAQQ…TGNRHSDSPR (96 aa)) is necessary for interaction with TP53BP2. S754 bears the Phosphoserine mark. Over residues 820–924 (SHGETGNRHS…KVDSKTDKTA (105 aa)) the composition is skewed to basic and acidic residues. K899 is covalently cross-linked (Glycyl lysine isopeptide (Lys-Gly) (interchain with G-Cter in SUMO2)).

The protein belongs to the DEAD box helicase family. DDX42 subfamily. In terms of assembly, transient component of the SF3B subcomplex of the 17S U2 SnRNP complex. Interacts (via the C-terminus) with TP53BP2; the interaction is not inhibitied by TP53BP2 ubiquitination and is independent of p53/TP53.

Its subcellular location is the cytoplasm. The protein localises to the nucleus. The catalysed reaction is ATP + H2O = ADP + phosphate + H(+). In terms of biological role, ATP-dependent RNA helicase that binds to partially double-stranded RNAs (dsRNAs) in order to unwind RNA secondary structures. Unwinding is promoted in the presence of single-strand binding proteins. Also mediates RNA duplex formation thereby displacing the single-strand RNA binding protein. ATP and ADP modulate its activity: ATP binding and hydrolysis by DDX42 triggers RNA strand separation, whereas the ADP-bound form of the protein triggers annealing of complementary RNA strands. Required for assembly of the 17S U2 SnRNP complex of the spliceosome, a large ribonucleoprotein complex that removes introns from transcribed pre-mRNAs: DDX42 associates transiently with the SF3B subcomplex of the 17S U2 SnRNP complex and is released after fulfilling its role in the assembly of 17S U2 SnRNP. Involved in the survival of cells by interacting with TP53BP2 and thereby counteracting the apoptosis-stimulating activity of TP53BP2. Relocalizes TP53BP2 to the cytoplasm. This is ATP-dependent RNA helicase DDX42 (DDX42) from Pongo abelii (Sumatran orangutan).